Reading from the N-terminus, the 174-residue chain is 3-hydroxydecanoyl-[acyl-carrier-protein] dehydratase (174 aa).

Histidine 71 is a catalytic residue.

It belongs to the thioester dehydratase family. FabA subfamily. Homodimer.

It localises to the cytoplasm. It carries out the reaction a (3R)-hydroxyacyl-[ACP] = a (2E)-enoyl-[ACP] + H2O. The enzyme catalyses (3R)-hydroxydecanoyl-[ACP] = (2E)-decenoyl-[ACP] + H2O. The catalysed reaction is (2E)-decenoyl-[ACP] = (3Z)-decenoyl-[ACP]. It functions in the pathway lipid metabolism; fatty acid biosynthesis. Functionally, necessary for the introduction of cis unsaturation into fatty acids. Catalyzes the dehydration of (3R)-3-hydroxydecanoyl-ACP to E-(2)-decenoyl-ACP and then its isomerization to Z-(3)-decenoyl-ACP. Can catalyze the dehydratase reaction for beta-hydroxyacyl-ACPs with saturated chain lengths up to 16:0, being most active on intermediate chain length. The chain is 3-hydroxydecanoyl-[acyl-carrier-protein] dehydratase from Nitrobacter hamburgensis (strain DSM 10229 / NCIMB 13809 / X14).